The chain runs to 311 residues: MSKLLVFGHQNPDTDAIASSYAFDYLAKKAFDLDTEVVALGDPNEETAFALDYFGVSAPRVVTSAKAEGASHVILTDHNEFPQSISDIREVEVYGIVDHHRVANFETANPLYMRVEPVGSASSIVYRLFKENRVDVPKDIAGLLLSGLISDTLLLKSPTTHASDHRVAVELAELAGVKLEEYGMAMLKAGTNLASKSEAELIDIDAKTFELNGNAVRVAQVNTVDIAEVLERKEAIEAAIKEVMASEGYSDFVLMITDIVNSNSEILALGANMDKVETAFDFKLEDNHAFLAGAVSRKKQVVPQLTESFGA.

The Mn(2+) site is built by His9, Asp13, Asp15, Asp77, His99, and Asp151.

The protein belongs to the PPase class C family. Mn(2+) serves as cofactor.

The protein localises to the cytoplasm. The catalysed reaction is diphosphate + H2O = 2 phosphate + H(+). This is Probable manganese-dependent inorganic pyrophosphatase from Streptococcus equi subsp. zooepidemicus (strain MGCS10565).